Here is a 315-residue protein sequence, read N- to C-terminus: Borealin (315 aa).

Disordered stretches follow at residues 103–126 (IEGHAPSATGSRNDEEDSSIGASG) and 138–226 (LRST…TPPM). Residue Thr146 is modified to Phosphothreonine. Phosphoserine is present on Ser152. The span at 153-162 (ARARRARRSR) shows a compositional bias: basic residues. Ser163 bears the Phosphoserine mark. Residues 178–188 (SISSSSSSSRN) show a composition bias toward low complexity. The residue at position 205 (Ser205) is a Phosphoserine. Phosphothreonine is present on Thr209. Ser218, Ser220, and Ser244 each carry phosphoserine.

It belongs to the borealin family. Component of the CPC complex. In terms of tissue distribution, ubiquitously expressed in the early embryo. Expression is restricted to the ventral nerve cord and brain during later embryonic stages.

Its subcellular location is the nucleus. It is found in the chromosome. The protein resides in the centromere. The protein localises to the cytoplasm. It localises to the cytoskeleton. Its subcellular location is the spindle. Component of the chromosomal passenger complex (CPC), a complex that acts as a key regulator of embryonic mitosis. The CPC complex has essential functions at the centromere for ensuring sister chromatid cohesion, recruitment of the CPC to kinetochores, and chromosome alignment and segregation. There is no function in meiotic histone phosphorylation or spindle formation. In Drosophila melanogaster (Fruit fly), this protein is Borealin (borr).